The primary structure comprises 274 residues: Regulator of G-protein signaling rgs-11 (274 aa).

The RGS domain occupies 137–256; sequence SPGLLAASKY…LEDPLYLDLL (120 aa).

The polypeptide is Regulator of G-protein signaling rgs-11 (rgs-11) (Caenorhabditis elegans).